Here is a 200-residue protein sequence, read N- to C-terminus: Cytochrome c biogenesis ATP-binding export protein CcmA (200 aa).

In terms of domain architecture, ABC transporter spans 1 to 200 (MRLSGNGLRC…ARELRIGGAA (200 aa)). An ATP-binding site is contributed by 35-42 (GPNGAGKT).

The protein belongs to the ABC transporter superfamily. CcmA exporter (TC 3.A.1.107) family. The complex is composed of two ATP-binding proteins (CcmA) and two transmembrane proteins (CcmB).

Its subcellular location is the cell inner membrane. The catalysed reaction is heme b(in) + ATP + H2O = heme b(out) + ADP + phosphate + H(+). Part of the ABC transporter complex CcmAB involved in the biogenesis of c-type cytochromes; once thought to export heme, this seems not to be the case, but its exact role is uncertain. Responsible for energy coupling to the transport system. This chain is Cytochrome c biogenesis ATP-binding export protein CcmA, found in Nitrobacter winogradskyi (strain ATCC 25391 / DSM 10237 / CIP 104748 / NCIMB 11846 / Nb-255).